The following is a 235-amino-acid chain: Peroxynitrite isomerase 2 (235 aa).

The short motif at 82 to 88 is the GXWXGXG element; the sequence is GVWRGEG. The heme b site is built by lysine 198 and histidine 225.

Belongs to the nitrobindin family. As to quaternary structure, homodimer. Requires heme b as cofactor.

The catalysed reaction is peroxynitrite = nitrate. It functions in the pathway nitrogen metabolism. In terms of biological role, heme-binding protein able to scavenge peroxynitrite and to protect free L-tyrosine against peroxynitrite-mediated nitration, by acting as a peroxynitrite isomerase that converts peroxynitrite to nitrate. Therefore, this protein likely plays a role in peroxynitrite sensing and in the detoxification of reactive nitrogen and oxygen species (RNS and ROS, respectively). Is able to bind nitric oxide (NO) in vitro, but may act as a sensor of peroxynitrite levels in vivo. The polypeptide is Peroxynitrite isomerase 2 (Mycolicibacterium paratuberculosis (strain ATCC BAA-968 / K-10) (Mycobacterium paratuberculosis)).